Consider the following 722-residue polypeptide: D-galactosyl-beta-1-&gt;4-L-rhamnose phosphorylase (722 aa).

The active-site Proton donor is aspartate 319.

The protein belongs to the glycoside hydrolase 112 family.

It catalyses the reaction beta-D-galactosyl-(1-&gt;4)-L-rhamnose + phosphate = alpha-D-galactose 1-phosphate + L-rhamnopyranose. Reversibly phosphorolyzes beta-D-galactosyl-(1-&gt;4)-L-rhamnose to form alpha-D-galactose 1-phosphate and L-rhamnose. Does not phosphorolyze galacto-N-biose or lacto-N-biose. In the reverse reaction, has the highest activity toward L-rhamnose, also has activity toward L-mannose, and low activity toward L-lyxose, D-glucose, 2-deoxy-D-glucose and D-galactose. This Lachnoclostridium phytofermentans (strain ATCC 700394 / DSM 18823 / ISDg) (Clostridium phytofermentans) protein is D-galactosyl-beta-1-&gt;4-L-rhamnose phosphorylase.